Consider the following 305-residue polypeptide: Probable branched-chain-amino-acid aminotransferase (305 aa).

K156 bears the N6-(pyridoxal phosphate)lysine mark.

Belongs to the class-IV pyridoxal-phosphate-dependent aminotransferase family. It depends on pyridoxal 5'-phosphate as a cofactor.

It carries out the reaction L-leucine + 2-oxoglutarate = 4-methyl-2-oxopentanoate + L-glutamate. It catalyses the reaction L-isoleucine + 2-oxoglutarate = (S)-3-methyl-2-oxopentanoate + L-glutamate. The catalysed reaction is L-valine + 2-oxoglutarate = 3-methyl-2-oxobutanoate + L-glutamate. It participates in amino-acid biosynthesis; L-isoleucine biosynthesis; L-isoleucine from 2-oxobutanoate: step 4/4. Its pathway is amino-acid biosynthesis; L-leucine biosynthesis; L-leucine from 3-methyl-2-oxobutanoate: step 4/4. The protein operates within amino-acid biosynthesis; L-valine biosynthesis; L-valine from pyruvate: step 4/4. In terms of biological role, acts on leucine, isoleucine and valine. The sequence is that of Probable branched-chain-amino-acid aminotransferase (ilvE) from Synechocystis sp. (strain ATCC 27184 / PCC 6803 / Kazusa).